Consider the following 97-residue polypeptide: uncharacterized protein (97 aa).

The signal sequence occupies residues 1–21 (MLLHGLGRMNIIFICFPSLAC).

This is an uncharacterized protein from Schizosaccharomyces pombe (strain 972 / ATCC 24843) (Fission yeast).